The following is a 552-amino-acid chain: FERRY endosomal RAB5 effector complex subunit 3 (552 aa).

Residue S79 is modified to Phosphoserine.

As to quaternary structure, component of the FERRY complex composed of five subunits, TBCK, PPP1R21, FERRY3, CRYZL1 and GATD1 with a ratio of 1:2:1:2:4, respectively.

It is found in the cytoplasm. The protein localises to the early endosome. In terms of biological role, component of the FERRY complex (Five-subunit Endosomal Rab5 and RNA/ribosome intermediary). The FERRY complex directly interacts with mRNAs and RAB5A, and functions as a RAB5A effector involved in the localization and the distribution of specific mRNAs most likely by mediating their endosomal transport. The complex recruits mRNAs and ribosomes to early endosomes through direct mRNA-interaction. Plays a role in mast cell degranulation. This is FERRY endosomal RAB5 effector complex subunit 3 from Mus musculus (Mouse).